Here is a 364-residue protein sequence, read N- to C-terminus: N-acetyl-gamma-glutamyl-phosphate reductase (364 aa).

Cys-157 is a catalytic residue.

The protein belongs to the NAGSA dehydrogenase family. Type 1 subfamily.

The protein localises to the cytoplasm. The enzyme catalyses N-acetyl-L-glutamate 5-semialdehyde + phosphate + NADP(+) = N-acetyl-L-glutamyl 5-phosphate + NADPH + H(+). It participates in amino-acid biosynthesis; L-arginine biosynthesis; N(2)-acetyl-L-ornithine from L-glutamate: step 3/4. Its function is as follows. Catalyzes the NADPH-dependent reduction of N-acetyl-5-glutamyl phosphate to yield N-acetyl-L-glutamate 5-semialdehyde. The polypeptide is N-acetyl-gamma-glutamyl-phosphate reductase (Bifidobacterium animalis subsp. lactis (strain AD011)).